Consider the following 176-residue polypeptide: Dynein light chain Tctex-type 5-B (176 aa).

The protein belongs to the dynein light chain Tctex-type family.

The polypeptide is Dynein light chain Tctex-type 5-B (Dynlt5-b) (Xenopus laevis (African clawed frog)).